The following is a 316-amino-acid chain: tRNA dimethylallyltransferase (316 aa).

Residue 17-24 coordinates ATP; the sequence is GPTASGKT. Residue 19–24 coordinates substrate; sequence TASGKT. 4 interaction with substrate tRNA regions span residues 42–45, 166–170, 247–252, and 280–287; these read DSAL, QRLSR, RCVGYR, and KRQITWLR.

Belongs to the IPP transferase family. In terms of assembly, monomer. Requires Mg(2+) as cofactor.

It carries out the reaction adenosine(37) in tRNA + dimethylallyl diphosphate = N(6)-dimethylallyladenosine(37) in tRNA + diphosphate. Its function is as follows. Catalyzes the transfer of a dimethylallyl group onto the adenine at position 37 in tRNAs that read codons beginning with uridine, leading to the formation of N6-(dimethylallyl)adenosine (i(6)A). The protein is tRNA dimethylallyltransferase of Escherichia coli O6:K15:H31 (strain 536 / UPEC).